The chain runs to 642 residues: Tigger transposable element derived 5 (642 aa).

Residues 1–54 (MYPASPSAGPALHPVPHRARLPRPRCLAEPPRSPAPGPGSTARPPPPAPGPRPR) form a disordered region. Over residues 31-52 (PRSPAPGPGSTARPPPPAPGPR) the composition is skewed to pro residues. One can recognise an HTH psq-type domain in the interval 56–107 (AVKMTFRKAYSIKDKLQAIERVKGGERQASVCRDFGVPGGTLRGWLKDEPKL). DNA-binding regions (H-T-H motif) lie at residues 83 to 103 (QASV…WLKD) and 154 to 187 (PVIQ…WQKR). The region spanning 121–194 (QRKKMRLANE…QKRHGISSQR (74 aa)) is the HTH CENPB-type domain. A compositionally biased stretch (low complexity) spans 198-208 (EAEPPVAGPAP). Residues 198–230 (EAEPPVAGPAPVKEEPAQPSSAGLLLDGTPATL) form a disordered region. Positions 239–364 (DEQIYNANVT…CLQQKAVLLV (126 aa)) constitute a DDE-1 domain. Positions 543–583 (GLPEGCGEEVAPAAPPSPASLPSSIGAGEEEEEEATEQGGV) are disordered.

It belongs to the tigger transposable element derived protein family.

The protein resides in the nucleus. The polypeptide is Tigger transposable element derived 5 (Tigd5) (Rattus norvegicus (Rat)).